The chain runs to 366 residues: Class I histocompatibility antigen, Gogo-C*0202 alpha chain (366 aa).

The N-terminal stretch at 1-24 is a signal peptide; that stretch reads MRVMAPRTLILLLSGALALTETWA. An alpha-1 region spans residues 25–114; sequence GSHSMRYFYT…LRGYYNQSED (90 aa). The Extracellular segment spans residues 25–308; it reads GSHSMRYFYT…EPSSQPTIPI (284 aa). An N-linked (GlcNAc...) asparagine glycan is attached at N110. Residues 115–206 are alpha-2; the sequence is GSHTLQSMYG…ENGKETLQRA (92 aa). Cystine bridges form between C125–C188 and C227–C283. An alpha-3 region spans residues 207 to 298; sequence EPPKTHVTHH…GLPEPLTLRW (92 aa). The region spanning 209–297 is the Ig-like C1-type domain; the sequence is PKTHVTHHPL…EGLPEPLTLR (89 aa). Positions 299–308 are connecting peptide; the sequence is EPSSQPTIPI. Residues 309-332 form a helical membrane-spanning segment; sequence VGIVVGLAVLVVLAVLGAVVTAMM. Residues 333-366 lie on the Cytoplasmic side of the membrane; the sequence is CRRKSSGGKGGSCSQAACSNSAQGSDESLITCKA.

It belongs to the MHC class I family. In terms of assembly, heterodimer of an alpha chain and a beta chain (beta-2-microglobulin).

The protein localises to the membrane. In terms of biological role, involved in the presentation of foreign antigens to the immune system. The sequence is that of Class I histocompatibility antigen, Gogo-C*0202 alpha chain from Gorilla gorilla gorilla (Western lowland gorilla).